The chain runs to 367 residues: ITLHRLAELVLPLGWFVPVPPGEERVTVGGAVGADLHGPNHHRAGSFARHLLAFELLTADGTVHVVDRGTPLFDATTGGLGLTGVVLTATLQLQPVATSLLLTGSARATDLDDLMARLCDADLRHTYASARVDLLARGAATGRGTVLHADHAPPEALPARLARRPLAARPQLPAPPQLPPGLVPQLTPDRPLGRRALGLLHDLRHRAAPRRRAGTLRGLAAALPVLDGGHALGRGEGTVAYRCAVGHGCEDVLRHLVRRVADEGCATRPGLLKRFGVGSPGWLSFPARGWGLSLELPARATGLTALLDELDEEVAAAGGRVCLARDSRVRPELLDAMYPLLDDFRELRAAVDPSSVFTSDLARRLGL.

Residues 1 to 96 enclose the FAD-binding PCMH-type domain; sequence ITLHRLAELV…LTATLQLQPV (96 aa).

It to M.tuberculosis Rv3790.

This is an uncharacterized protein from Streptomyces coelicolor.